The chain runs to 399 residues: Elongation factor Tu (399 aa).

Positions 10 to 209 (KPHVNIGTIG…AVDSYIPTPT (200 aa)) constitute a tr-type G domain. Positions 19–26 (GHVDHGKT) are G1. 19–26 (GHVDHGKT) serves as a coordination point for GTP. Thr-26 is a Mg(2+) binding site. Residues 60 to 64 (GITIA) form a G2 region. Residues 81 to 84 (DCPG) are G3. GTP-binding positions include 81–85 (DCPGH) and 136–139 (NKAD). Positions 136 to 139 (NKAD) are G4. The segment at 174–176 (SAL) is G5.

This sequence belongs to the TRAFAC class translation factor GTPase superfamily. Classic translation factor GTPase family. EF-Tu/EF-1A subfamily. In terms of assembly, monomer.

Its subcellular location is the cytoplasm. It catalyses the reaction GTP + H2O = GDP + phosphate + H(+). Its function is as follows. GTP hydrolase that promotes the GTP-dependent binding of aminoacyl-tRNA to the A-site of ribosomes during protein biosynthesis. The chain is Elongation factor Tu from Campylobacter jejuni (strain RM1221).